We begin with the raw amino-acid sequence, 277 residues long: Diaminopimelate epimerase (277 aa).

Asn13, Gln46, and Asn66 together coordinate substrate. Cys75 functions as the Proton donor in the catalytic mechanism. Substrate contacts are provided by residues 76 to 77, Asn160, Asn193, and 211 to 212; these read GN and ER. Cys220 functions as the Proton acceptor in the catalytic mechanism. Position 221 to 222 (221 to 222) interacts with substrate; the sequence is GT.

The protein belongs to the diaminopimelate epimerase family. Homodimer.

Its subcellular location is the cytoplasm. The catalysed reaction is (2S,6S)-2,6-diaminopimelate = meso-2,6-diaminopimelate. Its pathway is amino-acid biosynthesis; L-lysine biosynthesis via DAP pathway; DL-2,6-diaminopimelate from LL-2,6-diaminopimelate: step 1/1. Functionally, catalyzes the stereoinversion of LL-2,6-diaminopimelate (L,L-DAP) to meso-diaminopimelate (meso-DAP), a precursor of L-lysine and an essential component of the bacterial peptidoglycan. The sequence is that of Diaminopimelate epimerase from Saccharophagus degradans (strain 2-40 / ATCC 43961 / DSM 17024).